The primary structure comprises 525 residues: ESX-1 secretion-associated protein EspE (525 aa).

2 disordered regions span residues 244–341 (AVAG…PGAA) and 375–494 (ALQA…APVH). Positions 248 to 258 (DADDTTADDTA) are enriched in acidic residues. Residues 274–286 (ETSKEDGQSRHEN) are compositionally biased toward basic and acidic residues. Gly residues predominate over residues 292–306 (SGGGGGATSGGGGGA). Composition is skewed to low complexity over residues 307-319 (PSSA…AGTP), 332-341 (TPTDAQPGAA), and 375-397 (ALQA…AAAP). The span at 411–440 (DPDAEGDKDSDKRDGEGKEDGTAPRDREST) shows a compositional bias: basic and acidic residues.

The protein resides in the cytoplasm. In Mycolicibacterium smegmatis (strain ATCC 700084 / mc(2)155) (Mycobacterium smegmatis), this protein is ESX-1 secretion-associated protein EspE.